The following is a 345-amino-acid chain: Serpentine receptor class beta-5 (345 aa).

Residues 1–22 (MAEINQTKCDLAFQISYHPIYR) lie on the Extracellular side of the membrane. N-linked (GlcNAc...) asparagine glycosylation occurs at asparagine 5. The chain crosses the membrane as a helical span at residues 23 to 43 (LAQFWTLSVSLLAVPSLLYFL). The Cytoplasmic portion of the chain corresponds to 44–57 (LKRVLLLPFHGNLK). The chain crosses the membrane as a helical span at residues 58–78 (CLLITYFSSIFLYALVLCFDF). Residues 79 to 103 (SYQCLIPFIVTTKCSLIIDQTLYKC) lie on the Extracellular side of the membrane. The chain crosses the membrane as a helical span at residues 104-124 (GHMTSLFFLTTPMLLPFGFSI). Residues 125 to 142 (ERFVAVGMAYKYEKMRTL) lie on the Cytoplasmic side of the membrane. The chain crosses the membrane as a helical span at residues 143 to 163 (LGPILCFILVAPNFVVFYFLF). Residues 164-189 (RDEQFTDSFISFLVLPNTPAVQFNNY) are Extracellular-facing. A helical membrane pass occupies residues 190 to 210 (LWFLLYAKIGNFCCNCVLLIF). Residues 211 to 241 (HKRFKNTYLKKKTSLSVRYALEEISNSSKFT) lie on the Cytoplasmic side of the membrane. The chain crosses the membrane as a helical span at residues 242–262 (LILTFTHLVFFGAYTIGSILV). At 263–280 (RTLGESFFGNFLNFYVAR) the chain is on the extracellular side. A helical membrane pass occupies residues 281–301 (GVNCAVPTYNLLIAFVGLISL). Residues 302–345 (RQLNSRRHAKILTKVLIRVTGQEGARNYDDIIMQQWNTVSNRTR) are Cytoplasmic-facing.

Belongs to the nematode receptor-like protein srb family. In terms of tissue distribution, expressed throughout the head.

It localises to the cell membrane. The protein localises to the perikaryon. Its subcellular location is the cell projection. The protein resides in the dendrite. In terms of biological role, G-protein coupled receptor. Plays a role in the navigational capacity of sperm and promotes the targeting of sperm derived from males to the fertilization site in the uterus of hermaphrodites. This Caenorhabditis elegans protein is Serpentine receptor class beta-5.